The chain runs to 454 residues: Phosphoglucosamine mutase (454 aa).

The active-site Phosphoserine intermediate is serine 101. Mg(2+) is bound by residues serine 101, aspartate 243, aspartate 245, and aspartate 247. Serine 101 carries the post-translational modification Phosphoserine.

This sequence belongs to the phosphohexose mutase family. Requires Mg(2+) as cofactor. Post-translationally, activated by phosphorylation.

It catalyses the reaction alpha-D-glucosamine 1-phosphate = D-glucosamine 6-phosphate. Its function is as follows. Catalyzes the conversion of glucosamine-6-phosphate to glucosamine-1-phosphate. This Geotalea daltonii (strain DSM 22248 / JCM 15807 / FRC-32) (Geobacter daltonii) protein is Phosphoglucosamine mutase.